The primary structure comprises 287 residues: Pantothenate synthetase (287 aa).

30–37 (MGALHEGH) contributes to the ATP binding site. The active-site Proton donor is H37. A (R)-pantoate-binding site is contributed by Q61. Position 61 (Q61) interacts with beta-alanine. An ATP-binding site is contributed by 147–150 (GEKD). Residue Q153 coordinates (R)-pantoate. ATP is bound at residue 184 to 187 (MSSR).

The protein belongs to the pantothenate synthetase family. In terms of assembly, homodimer.

The protein resides in the cytoplasm. The enzyme catalyses (R)-pantoate + beta-alanine + ATP = (R)-pantothenate + AMP + diphosphate + H(+). It functions in the pathway cofactor biosynthesis; (R)-pantothenate biosynthesis; (R)-pantothenate from (R)-pantoate and beta-alanine: step 1/1. Catalyzes the condensation of pantoate with beta-alanine in an ATP-dependent reaction via a pantoyl-adenylate intermediate. In Granulibacter bethesdensis (strain ATCC BAA-1260 / CGDNIH1), this protein is Pantothenate synthetase.